The primary structure comprises 222 residues: UPF0502 protein Shewmr4_1554 (222 aa).

Residues 175–193 (SLSADSPSAGSNSLNAQDR) are compositionally biased toward polar residues. The tract at residues 175-194 (SLSADSPSAGSNSLNAQDRQ) is disordered.

Belongs to the UPF0502 family.

The sequence is that of UPF0502 protein Shewmr4_1554 from Shewanella sp. (strain MR-4).